Reading from the N-terminus, the 370-residue chain is Chaperone protein DnaJ (370 aa).

Residues 6–70 (DYYEVLGVQR…EKRSMYDRFG (65 aa)) enclose the J domain. Residues 128–208 (GVEKTIEYRR…CRGEGRIRQT (81 aa)) form a CR-type zinc finger. 8 residues coordinate Zn(2+): Cys141, Cys144, Cys158, Cys161, Cys182, Cys185, Cys196, and Cys199. 4 CXXCXGXG motif repeats span residues 141–148 (CPACRGSG), 158–165 (CPKCGGLG), 182–189 (CDMCRGEG), and 196–203 (CRECRGEG).

It belongs to the DnaJ family. Homodimer. It depends on Zn(2+) as a cofactor.

It localises to the cytoplasm. Participates actively in the response to hyperosmotic and heat shock by preventing the aggregation of stress-denatured proteins and by disaggregating proteins, also in an autonomous, DnaK-independent fashion. Unfolded proteins bind initially to DnaJ; upon interaction with the DnaJ-bound protein, DnaK hydrolyzes its bound ATP, resulting in the formation of a stable complex. GrpE releases ADP from DnaK; ATP binding to DnaK triggers the release of the substrate protein, thus completing the reaction cycle. Several rounds of ATP-dependent interactions between DnaJ, DnaK and GrpE are required for fully efficient folding. Also involved, together with DnaK and GrpE, in the DNA replication of plasmids through activation of initiation proteins. The chain is Chaperone protein DnaJ from Roseiflexus castenholzii (strain DSM 13941 / HLO8).